The following is a 360-amino-acid chain: Phospho-N-acetylmuramoyl-pentapeptide-transferase (360 aa).

10 helical membrane passes run Ile-27 to Trp-47, Thr-71 to Ala-91, Tyr-97 to Tyr-117, Trp-132 to Gly-152, Val-168 to Ser-188, Gly-199 to Thr-219, Ala-236 to Phe-256, Val-263 to Leu-283, Phe-288 to Val-308, and Val-338 to Lys-358.

Belongs to the glycosyltransferase 4 family. MraY subfamily. The cofactor is Mg(2+).

The protein resides in the cell inner membrane. It catalyses the reaction UDP-N-acetyl-alpha-D-muramoyl-L-alanyl-gamma-D-glutamyl-meso-2,6-diaminopimeloyl-D-alanyl-D-alanine + di-trans,octa-cis-undecaprenyl phosphate = di-trans,octa-cis-undecaprenyl diphospho-N-acetyl-alpha-D-muramoyl-L-alanyl-D-glutamyl-meso-2,6-diaminopimeloyl-D-alanyl-D-alanine + UMP. It functions in the pathway cell wall biogenesis; peptidoglycan biosynthesis. Catalyzes the initial step of the lipid cycle reactions in the biosynthesis of the cell wall peptidoglycan: transfers peptidoglycan precursor phospho-MurNAc-pentapeptide from UDP-MurNAc-pentapeptide onto the lipid carrier undecaprenyl phosphate, yielding undecaprenyl-pyrophosphoryl-MurNAc-pentapeptide, known as lipid I. The chain is Phospho-N-acetylmuramoyl-pentapeptide-transferase from Proteus mirabilis (strain HI4320).